A 442-amino-acid chain; its full sequence is Elongation factor 1-alpha 1 (442 aa).

The region spanning 5-227 (KEHLNLVVIG…AALDSFKIPK (223 aa)) is the tr-type G domain. Residues 14-21 (GHVDSGKS) form a G1 region. 14-21 (GHVDSGKS) is a binding site for GTP. A G2 region spans residues 70 to 74 (GITID). Residues 91–94 (DAPG) form a G3 region. GTP-binding positions include 91-95 (DAPGH) and 153-156 (NKMD). The segment at 153–156 (NKMD) is G4. Residues 194 to 196 (SGF) form a G5 region.

The protein belongs to the TRAFAC class translation factor GTPase superfamily. Classic translation factor GTPase family. EF-Tu/EF-1A subfamily.

It localises to the cytoplasm. In terms of biological role, this protein promotes the GTP-dependent binding of aminoacyl-tRNA to the A-site of ribosomes during protein biosynthesis. This is Elongation factor 1-alpha 1 (EFA1) from Euplotes crassus.